We begin with the raw amino-acid sequence, 339 residues long: Probable G-protein coupled receptor 33 (339 aa).

Residues 1–30 lie on the Extracellular side of the membrane; the sequence is MDLINSSTHVINVSTSLTNSTGVPTPAPKT. Asparagine 5, asparagine 12, and asparagine 19 each carry an N-linked (GlcNAc...) asparagine glycan. A helical membrane pass occupies residues 31–53; the sequence is IIAASLFMAFIIGVISNGLYLWM. Residues 54 to 64 lie on the Cytoplasmic side of the membrane; that stretch reads LQFKMQRTVNT. The helical transmembrane segment at 65–86 threads the bilayer; the sequence is LLFFHLILSYFISTLILPFMAT. The Extracellular segment spans residues 87 to 103; that stretch reads SFLQDNHWVFGSVLCKA. A disulfide bond links cysteine 101 and cysteine 179. A helical transmembrane segment spans residues 104-124; it reads FNSTLSVSMFASVFFLSAISV. Over 125 to 143 the chain is Cytoplasmic; it reads ARYYLILHPVWSQQHRTPH. The helical transmembrane segment at 144–165 threads the bilayer; sequence WASRIALQIWISATILSIPYLV. At 166-209 the chain is on the extracellular side; it reads FRTTHDDHKGRIKCQNNYIVSTDWESKEHQTLGQWIHAACFVGR. A helical membrane pass occupies residues 210–230; it reads FLLGFLLPFLVIIFCYKRVAT. Over 231-246 the chain is Cytoplasmic; the sequence is KMKEKGLFKSSKPFKV. A helical transmembrane segment spans residues 247 to 268; the sequence is MVTAVISFFVCWMPYHVHSGLV. Residues 269-283 lie on the Extracellular side of the membrane; that stretch reads LTKSQPLPLHLTLGL. Residues 284 to 303 traverse the membrane as a helical segment; the sequence is AVVTISFNTVVSPVLYLFTG. Topologically, residues 304 to 339 are cytoplasmic; the sequence is ENFKVFKKSILALFNSTFSDISSTERTQTLNSETEI.

This sequence belongs to the G-protein coupled receptor 1 family. In terms of tissue distribution, expressed predominantly in lung, spleen and testis.

It localises to the cell membrane. In terms of biological role, orphan receptor; could be a chemoattractant receptor. The sequence is that of Probable G-protein coupled receptor 33 (Gpr33) from Mus musculus (Mouse).